The sequence spans 153 residues: ATP synthase subunit b' (153 aa).

Residues 23–40 traverse the membrane as a helical segment; that stretch reads LMAIQVVALTYILNSLFF.

Belongs to the ATPase B chain family. In terms of assembly, F-type ATPases have 2 components, F(1) - the catalytic core - and F(0) - the membrane proton channel. F(1) has five subunits: alpha(3), beta(3), gamma(1), delta(1), epsilon(1). F(0) has four main subunits: a(1), b(1), b'(1) and c(10-14). The alpha and beta chains form an alternating ring which encloses part of the gamma chain. F(1) is attached to F(0) by a central stalk formed by the gamma and epsilon chains, while a peripheral stalk is formed by the delta, b and b' chains.

It is found in the cellular thylakoid membrane. F(1)F(0) ATP synthase produces ATP from ADP in the presence of a proton or sodium gradient. F-type ATPases consist of two structural domains, F(1) containing the extramembraneous catalytic core and F(0) containing the membrane proton channel, linked together by a central stalk and a peripheral stalk. During catalysis, ATP synthesis in the catalytic domain of F(1) is coupled via a rotary mechanism of the central stalk subunits to proton translocation. In terms of biological role, component of the F(0) channel, it forms part of the peripheral stalk, linking F(1) to F(0). The b'-subunit is a diverged and duplicated form of b found in plants and photosynthetic bacteria. The chain is ATP synthase subunit b' from Prochlorococcus marinus (strain MIT 9215).